Reading from the N-terminus, the 252-residue chain is Fructose-1,6-bisphosphatase/inositol-1-monophosphatase (252 aa).

Asp-38, Thr-40, Glu-67, Asp-82, Leu-84, and Asp-85 together coordinate Mg(2+). Residues 85–87, Arg-167, Ala-172, and Arg-191 contribute to the substrate site; that span reads DGT. Residue Asp-200 participates in Mg(2+) binding.

It belongs to the inositol monophosphatase superfamily. FBPase class 4 family. Homodimer. Mg(2+) serves as cofactor. It depends on Mn(2+) as a cofactor.

It carries out the reaction beta-D-fructose 1,6-bisphosphate + H2O = beta-D-fructose 6-phosphate + phosphate. The catalysed reaction is a myo-inositol phosphate + H2O = myo-inositol + phosphate. With respect to regulation, both FBPase and IMPase activities are inhibited by Ca(2+). In contrast to mammalian I-1-P phosphatases, is only very weakly inhibited by Li(+) (with an IC(50) of about 290 mM). In terms of biological role, phosphatase with broad specificity; it can dephosphorylate fructose 1,6-bisphosphate, both D and L isomers of inositol-1-phosphate (I-1-P), 2'-AMP, pNPP, inositol-2-phosphate, beta-glycerol phosphate, and alpha-D-glucose-1-phosphate. Cannot hydrolyze glucose-6-phosphate and fructose-6-phosphate. May be involved in the biosynthesis of a unique osmolyte, di-myo-inositol 1,1-phosphate. This chain is Fructose-1,6-bisphosphatase/inositol-1-monophosphatase (suhB), found in Archaeoglobus fulgidus (strain ATCC 49558 / DSM 4304 / JCM 9628 / NBRC 100126 / VC-16).